A 190-amino-acid polypeptide reads, in one-letter code: Ion-translocating oxidoreductase complex subunit B (190 aa).

The tract at residues Met-1 to Ala-26 is hydrophobic. The 59-residue stretch at Glu-32 to Val-90 folds into the 4Fe-4S domain. Residues Cys-49, Cys-52, Cys-57, Cys-73, Cys-115, Cys-118, Cys-121, Cys-125, Cys-145, Cys-148, Cys-151, and Cys-155 each contribute to the [4Fe-4S] cluster site. 4Fe-4S ferredoxin-type domains are found at residues Gln-106–Arg-135 and Ala-136–Val-165.

The protein belongs to the 4Fe4S bacterial-type ferredoxin family. RnfB subfamily. In terms of assembly, the complex is composed of six subunits: RnfA, RnfB, RnfC, RnfD, RnfE and RnfG. [4Fe-4S] cluster serves as cofactor.

Its subcellular location is the cell inner membrane. In terms of biological role, part of a membrane-bound complex that couples electron transfer with translocation of ions across the membrane. This is Ion-translocating oxidoreductase complex subunit B from Serratia proteamaculans (strain 568).